The sequence spans 261 residues: Carbonic anhydrase 1 (261 aa).

Alanine 2 is subject to N-acetylalanine. One can recognise an Alpha-carbonic anhydrase domain in the interval 4 to 261 (PDWGYDGENG…LNGRTVKASF (258 aa)). The Proton donor/acceptor role is filled by histidine 65. Zn(2+)-binding residues include histidine 95, histidine 97, and histidine 120. Residues threonine 200 and 200 to 201 (TH) each bind substrate.

Belongs to the alpha-carbonic anhydrase family. Requires Zn(2+) as cofactor.

It is found in the cytoplasm. The enzyme catalyses hydrogencarbonate + H(+) = CO2 + H2O. It carries out the reaction urea = cyanamide + H2O. Inhibited by acetazolamide. Catalyzes the reversible hydration of carbon dioxide. Can hydrate cyanamide to urea. The sequence is that of Carbonic anhydrase 1 (CA1) from Bos taurus (Bovine).